A 611-amino-acid chain; its full sequence is Polyphenol oxidase 4 (611 aa).

Residues His57, His82, His91, His251, His255, and His283 each coordinate Cu cation. Residues 80–82 (CTH) constitute a cross-link (2'-(S-cysteinyl)-histidine (Cys-His)). His255 provides a ligand contact to substrate. A propeptide spans 380–611 (IKKSEGGKNP…GGLGALGRIF (232 aa)) (removed in mature form).

Belongs to the tyrosinase family. Heterotetramer. Requires Cu(2+) as cofactor. The C-ter is probably cleaved after Gly-379 since the mature active protein is smaller than the protein encoded by the gene.

It carries out the reaction 2 L-dopa + O2 = 2 L-dopaquinone + 2 H2O. It catalyses the reaction L-tyrosine + O2 = L-dopaquinone + H2O. Copper-containing oxidase that catalyzes both the o-hydroxylation of monophenols and the subsequent oxidation of the resulting o-diphenols into reactive o-quinones, which evolve spontaneously to produce intermediates, which associate in dark brown pigments. Involved in the initial step of melanin synthesis. Melanins constitute a mechanism of defense and resistance to stress such as UV radiations, free radicals, gamma rays, dehydratation and extreme temperatures, and contribute to the fungal cell-wall resistance against hydrolytic enzymes in avoiding cellular lysis. Fungal pigments are also involved in the formation and stability of spores. The chain is Polyphenol oxidase 4 (PPO4) from Agaricus bisporus (White button mushroom).